The primary structure comprises 359 residues: MSKVCIIGTTTWGITLGTIIAHKGREVMLWARTEDEAMLLSTQRRPADFLPENYHFPEFMNVTACLEEAVAGADMVLLAVPSQRMRPNIRLVAPLLTKSMLICSAAKGLEIGTAKRMSQVITDEISPDFAKNICVLSGPNLAMEILKGLPAVTVLAADTEKTAKKAAKLITAANFSAYTNTDIIGVELGGSLKNIIALGAGIVDGLNLGNNAKSALITRGLTEISALGAALGANPLTLSGLAGLGDLIATCSSNLSRNHFVGVELTKGRSLNDIMYNMSNVAEGVSTTAVAYEMARSMDLEMPVTENIYNVLYNNADPKEAARILMDAQATHELAGRKWNLFKMFRKRKARKTPELNPD.

NADPH-binding residues include threonine 11, tryptophan 12, arginine 32, and lysine 107. The sn-glycerol 3-phosphate site is built by lysine 107 and glycine 138. Residue alanine 142 coordinates NADPH. Positions 193, 246, 256, 257, and 258 each coordinate sn-glycerol 3-phosphate. The Proton acceptor role is filled by lysine 193. Arginine 257 is a binding site for NADPH. NADPH is bound by residues valine 281 and glutamate 283.

Belongs to the NAD-dependent glycerol-3-phosphate dehydrogenase family.

The protein resides in the cytoplasm. It carries out the reaction sn-glycerol 3-phosphate + NAD(+) = dihydroxyacetone phosphate + NADH + H(+). The catalysed reaction is sn-glycerol 3-phosphate + NADP(+) = dihydroxyacetone phosphate + NADPH + H(+). It participates in membrane lipid metabolism; glycerophospholipid metabolism. Functionally, catalyzes the reduction of the glycolytic intermediate dihydroxyacetone phosphate (DHAP) to sn-glycerol 3-phosphate (G3P), the key precursor for phospholipid synthesis. The sequence is that of Glycerol-3-phosphate dehydrogenase [NAD(P)+] from Dehalococcoides mccartyi (strain CBDB1).